The chain runs to 33 residues: Imperacalcin (33 aa).

3 disulfides stabilise this stretch: Cys3-Cys17, Cys10-Cys21, and Cys16-Cys32. Important for stimulation of [3H]ryanodine binding to RYR1 regions lie at residues 8-9 (KR) and 19-20 (KK). The essential for stimulation of [3H]ryanodine binding to RYR1 stretch occupies residues 22-24 (KRR). The interval 25-27 (GTN) is important for stimulation of [3H]ryanodine binding to RYR1.

The protein belongs to the scorpion calcin family. In terms of tissue distribution, expressed by the venom gland.

The protein resides in the secreted. Functionally, this toxin affects the activity of ryanodine receptors 1, 2 and 3 (RyR1, RyR2 and RyR3). At lower concentrations the toxin increases full openings of the RyRs, and at higher concentrations it inhibits full openings and induces openings to subconductance levels (30% of the full conductance state) and reduces the number of full conductance openings. The different actions may be attributed to the toxins binding at different sites on the RyRs, with binding at a high-affinity site mediating the increase in full openings and the induction of subconductance states evoked upon binding to a lower-affinity site. Furthermore, it triggers calcium release from sarcoplasmic vesicles (11.7 nM are enough to induce a sharp release, and 70% of the total calcium is released after toxin (100 nM) addition) probably by acting as a cell-penetrating peptide (CPP). In addition, it has been shown to dose-dependently stimulate ryanodine binding to RyR1 (EC(50)=8.7 nM). It also augments the bell-shaped calcium-[3H]ryanodine binding curve that is maximal at about 10 uM calcium concentration. It binds a different site as ryanodine. It acts synergistically with caffeine. In vivo, intracerebroventricular injection into mice induces neurotoxic symptoms, followed by death. The sequence is that of Imperacalcin from Pandinus imperator (Emperor scorpion).